The sequence spans 235 residues: 5'-methylthioadenosine/S-adenosylhomocysteine nucleosidase (235 aa).

The active-site Proton acceptor is the glutamate 13. Residues glycine 79, methionine 154, and 175–176 (ME) contribute to the substrate site. Aspartate 199 serves as the catalytic Proton donor.

This sequence belongs to the PNP/UDP phosphorylase family. MtnN subfamily.

It carries out the reaction S-adenosyl-L-homocysteine + H2O = S-(5-deoxy-D-ribos-5-yl)-L-homocysteine + adenine. The enzyme catalyses S-methyl-5'-thioadenosine + H2O = 5-(methylsulfanyl)-D-ribose + adenine. The catalysed reaction is 5'-deoxyadenosine + H2O = 5-deoxy-D-ribose + adenine. Its pathway is amino-acid biosynthesis; L-methionine biosynthesis via salvage pathway; S-methyl-5-thio-alpha-D-ribose 1-phosphate from S-methyl-5'-thioadenosine (hydrolase route): step 1/2. In terms of biological role, catalyzes the irreversible cleavage of the glycosidic bond in both 5'-methylthioadenosine (MTA) and S-adenosylhomocysteine (SAH/AdoHcy) to adenine and the corresponding thioribose, 5'-methylthioribose and S-ribosylhomocysteine, respectively. Also cleaves 5'-deoxyadenosine, a toxic by-product of radical S-adenosylmethionine (SAM) enzymes, into 5-deoxyribose and adenine. In Chromohalobacter salexigens (strain ATCC BAA-138 / DSM 3043 / CIP 106854 / NCIMB 13768 / 1H11), this protein is 5'-methylthioadenosine/S-adenosylhomocysteine nucleosidase.